A 177-amino-acid chain; its full sequence is Adenine phosphoribosyltransferase (177 aa).

The protein belongs to the purine/pyrimidine phosphoribosyltransferase family. In terms of assembly, homodimer.

The protein resides in the cytoplasm. The catalysed reaction is AMP + diphosphate = 5-phospho-alpha-D-ribose 1-diphosphate + adenine. The protein operates within purine metabolism; AMP biosynthesis via salvage pathway; AMP from adenine: step 1/1. Its function is as follows. Catalyzes a salvage reaction resulting in the formation of AMP, that is energically less costly than de novo synthesis. The polypeptide is Adenine phosphoribosyltransferase (Chlorobium phaeobacteroides (strain BS1)).